A 382-amino-acid polypeptide reads, in one-letter code: ATP phosphoribosyltransferase regulatory subunit (382 aa).

The protein belongs to the class-II aminoacyl-tRNA synthetase family. HisZ subfamily. In terms of assembly, heteromultimer composed of HisG and HisZ subunits.

It is found in the cytoplasm. It participates in amino-acid biosynthesis; L-histidine biosynthesis; L-histidine from 5-phospho-alpha-D-ribose 1-diphosphate: step 1/9. Required for the first step of histidine biosynthesis. May allow the feedback regulation of ATP phosphoribosyltransferase activity by histidine. This chain is ATP phosphoribosyltransferase regulatory subunit, found in Burkholderia pseudomallei (strain K96243).